Reading from the N-terminus, the 160-residue chain is Globin CTT-II beta (160 aa).

Residues 1-15 form the signal peptide; it reads MKFLVLALCIAAAVA. In terms of domain architecture, Globin spans 17-160; it reads PLSADEASLV…NVFNMMFSYL (144 aa). Heme b-binding residues include His75 and His110.

Belongs to the globin family. In terms of assembly, homodimer.

In Chironomus thummi thummi (Midge), this protein is Globin CTT-II beta.